Here is a 249-residue protein sequence, read N- to C-terminus: 5'-nucleotidase SurE (249 aa).

A divalent metal cation is bound by residues Asp-8, Asp-9, Ser-39, and Asn-91.

It belongs to the SurE nucleotidase family. The cofactor is a divalent metal cation.

Its subcellular location is the cytoplasm. It carries out the reaction a ribonucleoside 5'-phosphate + H2O = a ribonucleoside + phosphate. Its function is as follows. Nucleotidase that shows phosphatase activity on nucleoside 5'-monophosphates. The chain is 5'-nucleotidase SurE from Pseudomonas aeruginosa (strain LESB58).